The chain runs to 200 residues: Ciliary neurotrophic factor (200 aa).

Belongs to the CNTF family. In terms of assembly, homodimer. In terms of tissue distribution, nervous system.

It is found in the cytoplasm. In terms of biological role, CNTF is a survival factor for various neuronal cell types. Seems to prevent the degeneration of motor axons after axotomy. The sequence is that of Ciliary neurotrophic factor (CNTF) from Homo sapiens (Human).